The sequence spans 276 residues: Glutamate 5-kinase (276 aa).

K14 provides a ligand contact to ATP. S54, D141, and N157 together coordinate substrate. Residues 177 to 178 (SD) and 219 to 225 (TGGMLTK) each bind ATP.

It belongs to the glutamate 5-kinase family.

It is found in the cytoplasm. The enzyme catalyses L-glutamate + ATP = L-glutamyl 5-phosphate + ADP. It functions in the pathway amino-acid biosynthesis; L-proline biosynthesis; L-glutamate 5-semialdehyde from L-glutamate: step 1/2. Its function is as follows. Catalyzes the transfer of a phosphate group to glutamate to form L-glutamate 5-phosphate. This is Glutamate 5-kinase from Listeria monocytogenes serotype 4a (strain HCC23).